Reading from the N-terminus, the 372-residue chain is N-methyl-L-tryptophan oxidase (372 aa).

Position 4-34 (4-34 (DLIIIGSGSVGAAAGYYATRAGLNVLMTDAH)) interacts with FAD. Residue Cys-308 is modified to S-8alpha-FAD cysteine.

The protein belongs to the MSOX/MTOX family. MTOX subfamily. In terms of assembly, monomer. It depends on FAD as a cofactor.

It catalyses the reaction N(alpha)-methyl-L-tryptophan + O2 + H2O = L-tryptophan + formaldehyde + H2O2. In terms of biological role, catalyzes the oxidative demethylation of N-methyl-L-tryptophan. The polypeptide is N-methyl-L-tryptophan oxidase (Escherichia coli O6:H1 (strain CFT073 / ATCC 700928 / UPEC)).